The sequence spans 201 residues: Small ribosomal subunit protein uS4c (201 aa).

The 64-residue stretch at 90–153 folds into the S4 RNA-binding domain; sequence MRLDNVIFRL…SSQNLVKRYL (64 aa).

This sequence belongs to the universal ribosomal protein uS4 family. Part of the 30S ribosomal subunit. Contacts protein S5. The interaction surface between S4 and S5 is involved in control of translational fidelity.

The protein localises to the plastid. It is found in the chloroplast. In terms of biological role, one of the primary rRNA binding proteins, it binds directly to 16S rRNA where it nucleates assembly of the body of the 30S subunit. Its function is as follows. With S5 and S12 plays an important role in translational accuracy. This Gracilaria tenuistipitata var. liui (Red alga) protein is Small ribosomal subunit protein uS4c (rps4).